Reading from the N-terminus, the 886-residue chain is Envelope glycoprotein GP350 (886 aa).

The Virion surface portion of the chain corresponds to 1–839 (MEAALLVCQY…TSQPRFSNLS (839 aa)). Residues asparagine 47, asparagine 87, asparagine 114, asparagine 166, asparagine 169, asparagine 195, asparagine 229, asparagine 277, asparagine 318, asparagine 328, asparagine 345, asparagine 356, asparagine 378, asparagine 386, asparagine 411, asparagine 435, asparagine 443, asparagine 457, asparagine 497, asparagine 519, asparagine 533, asparagine 554, asparagine 568, asparagine 589, asparagine 603, asparagine 606, asparagine 624, and asparagine 635 are each glycosylated (N-linked (GlcNAc...) asparagine; by host). The disordered stretch occupies residues 423 to 810 (KAPESTTTSP…PSTSSKLRPR (388 aa)). Residues 428 to 437 (TTTSPTLNTT) show a composition bias toward low complexity. Polar residues predominate over residues 442 to 488 (PNTTTGLPSSTHVPTNLTAPASTGPTVSTADVTSPTPAGTTSGASPV). Low complexity predominate over residues 507–595 (TSPTSAVTTP…PTPNATSPTV (89 aa)). Polar residues predominate over residues 596–637 (GETSPQANTTNHTLGGTSSTPVVTSPPKNATSAVTTGQHNIT). Over residues 638–660 (SSSTSSMSLRPSSISETLSPSTS) the composition is skewed to low complexity. N-linked (GlcNAc...) asparagine; by host glycosylation is found at asparagine 662 and asparagine 680. Residues 684-699 (VTPASTSTHHVSTSSP) show a composition bias toward low complexity. Positions 704–720 (GTTSQASGPGNSSTSTK) are enriched in polar residues. Asparagine 714, asparagine 725, asparagine 734, and asparagine 759 each carry an N-linked (GlcNAc...) asparagine; by host glycan. Residues 733 to 760 (KNATSPQAPSGQKTAVPTVTSTGGKANS) show a composition bias toward polar residues. Positions 761 to 771 (TTGGKHTTGHG) are enriched in low complexity. The segment covering 773 to 806 (RTSTEPTTDYGGDSTTPRTRYNATTYLPPSTSSK) has biased composition (polar residues). N-linked (GlcNAc...) asparagine; by host glycans are attached at residues asparagine 794 and asparagine 837. Residues 840–860 (MLVLQWASLAVLTLLLLLVMA) traverse the membrane as a helical segment. Residues 861-886 (DCAFRRNLSTSHTYTTPPYDDAETYV) lie on the Intravirion side of the membrane.

This sequence belongs to the Epstein-Barr GP350 family. As to quaternary structure, interacts with host CR2. Post-translationally, extensively glycosylated.

The protein localises to the virion membrane. The protein resides in the host membrane. Initiates virion attachment to host B-lymphocyte cell, leading to virus entry. Acts by binding to host CR2 at the surface of B-lymphocytes, facilitating the binding of viral glycoprotein gp42 to HLA class II molecules. Attachment triggers virion-host membrane fusion and invasion of the host cell. The chain is Envelope glycoprotein GP350 from Homo sapiens (Human).